Here is a 2161-residue protein sequence, read N- to C-terminus: DNA polymerase epsilon catalytic subunit A (2161 aa).

3 short sequence motifs (nuclear localization signal) span residues 5 to 12 (NRRRDRKD), 1137 to 1144 (HKKVREKD), and 1239 to 1246 (LKKRKWKV). 4 residues coordinate Zn(2+): cysteine 2038, cysteine 2041, cysteine 2063, and cysteine 2068. Residues 2038 to 2068 (CSNCDAYRDLDICRDPALLTEKEWSCADTQC) form a CysA-type zinc finger. 4 residues coordinate [4Fe-4S] cluster: cysteine 2099, cysteine 2102, cysteine 2114, and cysteine 2116. The CysB motif signature appears at 2099-2116 (CIRCNQVKAAHLTEQCEC). A Nuclear localization signal 4 motif is present at residues 2130 to 2137 (SKRMEIFM).

This sequence belongs to the DNA polymerase type-B family. As to quaternary structure, heterotetramer. Subunit of the DNA polymerase II. Interacts (via C-terminus) with DPB2. Interacts with LHP1/TFL2. [4Fe-4S] cluster serves as cofactor. As to expression, mostly expressed at low levels in inflorescence (floral meristem and flowers until anthesis), and, to a lower extent, in roots, seeds and leaves.

The protein localises to the nucleus. It catalyses the reaction DNA(n) + a 2'-deoxyribonucleoside 5'-triphosphate = DNA(n+1) + diphosphate. DNA polymerase II, which participates in chromosomal DNA replication. Required for the timing and determination of cell fate during plant embryogenesis and root pole development, by promoting cell cycle and cell type patterning. Necessary for proper shoot (SAM) and root apical meristem (RAM) functions. Involved in maintaining epigenetic states, controlling hypersensitive response (HR), and mediating abscisic acid (ABA) signaling. Required for flowering repression through a mechanism involving epigenetic gene silencing. May participate in processes involved in chromatin-mediated cellular memory. This chain is DNA polymerase epsilon catalytic subunit A (POL2A), found in Arabidopsis thaliana (Mouse-ear cress).